The following is a 266-amino-acid chain: UPF0294 protein YafD (266 aa).

It belongs to the UPF0294 family.

The protein localises to the cytoplasm. The chain is UPF0294 protein YafD from Shigella dysenteriae serotype 1 (strain Sd197).